Consider the following 37-residue polypeptide: Large ribosomal subunit protein bL36 (37 aa).

The protein belongs to the bacterial ribosomal protein bL36 family.

The chain is Large ribosomal subunit protein bL36 from Rippkaea orientalis (strain PCC 8801 / RF-1) (Cyanothece sp. (strain PCC 8801)).